The sequence spans 482 residues: ATP synthase subunit beta (482 aa).

Gly-168–Thr-175 is an ATP binding site.

This sequence belongs to the ATPase alpha/beta chains family. In terms of assembly, F-type ATPases have 2 components, CF(1) - the catalytic core - and CF(0) - the membrane proton channel. CF(1) has five subunits: alpha(3), beta(3), gamma(1), delta(1), epsilon(1). CF(0) has three main subunits: a(1), b(2) and c(9-12). The alpha and beta chains form an alternating ring which encloses part of the gamma chain. CF(1) is attached to CF(0) by a central stalk formed by the gamma and epsilon chains, while a peripheral stalk is formed by the delta and b chains.

The protein resides in the cell membrane. It catalyses the reaction ATP + H2O + 4 H(+)(in) = ADP + phosphate + 5 H(+)(out). In terms of biological role, produces ATP from ADP in the presence of a proton gradient across the membrane. The catalytic sites are hosted primarily by the beta subunits. This Nocardia farcinica (strain IFM 10152) protein is ATP synthase subunit beta.